The sequence spans 95 residues: Co-chaperonin GroES (95 aa).

Belongs to the GroES chaperonin family. Heptamer of 7 subunits arranged in a ring. Interacts with the chaperonin GroEL.

The protein localises to the cytoplasm. Functionally, together with the chaperonin GroEL, plays an essential role in assisting protein folding. The GroEL-GroES system forms a nano-cage that allows encapsulation of the non-native substrate proteins and provides a physical environment optimized to promote and accelerate protein folding. GroES binds to the apical surface of the GroEL ring, thereby capping the opening of the GroEL channel. The polypeptide is Co-chaperonin GroES (Chlorobium phaeovibrioides (strain DSM 265 / 1930) (Prosthecochloris vibrioformis (strain DSM 265))).